Here is a 453-residue protein sequence, read N- to C-terminus: Omega-3 fatty acid desaturase, chloroplastic (453 aa).

The Histidine box-1 signature appears at 171 to 175 (HDCGH). Residues 207–211 (HRTHH) carry the Histidine box-2 motif. The Histidine box-3 motif lies at 374-378 (HVIHH).

This sequence belongs to the fatty acid desaturase type 1 family.

It is found in the plastid. It localises to the chloroplast membrane. The protein operates within lipid metabolism; polyunsaturated fatty acid biosynthesis. In terms of biological role, chloroplast omega-3 fatty acid desaturase introduces the third double bond in the biosynthesis of 16:3 and 18:3 fatty acids, important constituents of plant membranes. It is thought to use ferredoxin as an electron donor and to act on fatty acids esterified to galactolipids, sulfolipids and phosphatidylglycerol. This Glycine max (Soybean) protein is Omega-3 fatty acid desaturase, chloroplastic (FAD7).